Here is a 790-residue protein sequence, read N- to C-terminus: LPS-assembly protein LptD (790 aa).

The first 20 residues, 1–20 (MRMLRWLILSAFSVAGAVQA), serve as a signal peptide directing secretion.

It belongs to the LptD family. Component of the lipopolysaccharide transport and assembly complex. Interacts with LptE and LptA.

Its subcellular location is the cell outer membrane. Functionally, together with LptE, is involved in the assembly of lipopolysaccharide (LPS) at the surface of the outer membrane. This chain is LPS-assembly protein LptD, found in Bordetella pertussis (strain Tohama I / ATCC BAA-589 / NCTC 13251).